We begin with the raw amino-acid sequence, 41 residues long: Photosystem II reaction center protein L (41 aa).

The helical transmembrane segment at 20 to 40 (LFLGLLLVFVLGILSPATSLT) threads the bilayer.

This sequence belongs to the PsbL family. In terms of assembly, PSII is composed of 1 copy each of membrane proteins PsbA, PsbB, PsbC, PsbD, PsbE, PsbF, PsbH, PsbI, PsbJ, PsbK, PsbL, PsbM, PsbT, PsbX, PsbY, PsbZ, Psb30/Ycf12, peripheral proteins PsbO, CyanoQ (PsbQ), PsbU, PsbV and a large number of cofactors. It forms dimeric complexes.

The protein localises to the cellular thylakoid membrane. In terms of biological role, one of the components of the core complex of photosystem II (PSII). PSII is a light-driven water:plastoquinone oxidoreductase that uses light energy to abstract electrons from H(2)O, generating O(2) and a proton gradient subsequently used for ATP formation. It consists of a core antenna complex that captures photons, and an electron transfer chain that converts photonic excitation into a charge separation. This subunit is found at the monomer-monomer interface and is required for correct PSII assembly and/or dimerization. This chain is Photosystem II reaction center protein L, found in Synechococcus sp. (strain ATCC 27144 / PCC 6301 / SAUG 1402/1) (Anacystis nidulans).